A 220-amino-acid chain; its full sequence is Large ribosomal subunit protein uL3 (220 aa).

The disordered stretch occupies residues 137–159 (GASHGAHKNHRKPGSIGGASTPS).

This sequence belongs to the universal ribosomal protein uL3 family. In terms of assembly, part of the 50S ribosomal subunit. Forms a cluster with proteins L14 and L19.

Functionally, one of the primary rRNA binding proteins, it binds directly near the 3'-end of the 23S rRNA, where it nucleates assembly of the 50S subunit. This is Large ribosomal subunit protein uL3 from Renibacterium salmoninarum (strain ATCC 33209 / DSM 20767 / JCM 11484 / NBRC 15589 / NCIMB 2235).